Consider the following 49-residue polypeptide: uncharacterized protein (49 aa).

This is an uncharacterized protein from Saccharomyces cerevisiae (strain ATCC 204508 / S288c) (Baker's yeast).